The sequence spans 526 residues: Peptide chain release factor 3 (526 aa).

The region spanning 9–277 (DKRRTFAIIS…GIVEWAPKPL (269 aa)) is the tr-type G domain. Residues 18 to 25 (SHPDAGKT), 86 to 90 (DTPGH), and 140 to 143 (NKLD) contribute to the GTP site.

It belongs to the TRAFAC class translation factor GTPase superfamily. Classic translation factor GTPase family. PrfC subfamily.

The protein localises to the cytoplasm. Functionally, increases the formation of ribosomal termination complexes and stimulates activities of RF-1 and RF-2. It binds guanine nucleotides and has strong preference for UGA stop codons. It may interact directly with the ribosome. The stimulation of RF-1 and RF-2 is significantly reduced by GTP and GDP, but not by GMP. The sequence is that of Peptide chain release factor 3 from Shewanella sp. (strain MR-4).